The chain runs to 413 residues: Putative competence-damage inducible protein (413 aa).

This sequence belongs to the CinA family.

The chain is Putative competence-damage inducible protein from Desulforudis audaxviator (strain MP104C).